We begin with the raw amino-acid sequence, 571 residues long: S100P-binding protein (571 aa).

Over residues 270–280 (SDIPFDGDIDE) the composition is skewed to acidic residues. 2 disordered regions span residues 270 to 312 (SDIP…LESV) and 356 to 385 (NGQNNSNKVPLPPSDTAPGPQLPADPCSQS). Residues 299 to 309 (TSESTPASSEL) are compositionally biased toward polar residues. Positions 365 to 378 (PLPPSDTAPGPQLP) are enriched in pro residues.

The protein localises to the nucleus. The protein is S100P-binding protein (s100pbp) of Xenopus tropicalis (Western clawed frog).